Consider the following 460-residue polypeptide: Nitrilase and fragile histidine triad fusion protein NitFhit (460 aa).

Positions 33-279 (ATIAVGQMRS…LDIGTAEVDL (247 aa)) constitute a CN hydrolase domain. Active-site residues include glutamate 72, lysine 142, and cysteine 183. The HIT domain maps to 315–422 (DRPFATNIVD…MPRRLGDFGH (108 aa)). The Histidine triad motif motif lies at 407-411 (HVHFH). The Tele-AMP-histidine intermediate role is filled by histidine 409.

It in the N-terminal section; belongs to the UPF0012 family. Homotetramer. Requires Mn(2+) as cofactor.

The catalysed reaction is P(1),P(3)-bis(5'-adenosyl) triphosphate + H2O = AMP + ADP + 2 H(+). Functionally, cleaves A-5'-PPP-5'A to yield AMP and ADP. The sequence is that of Nitrilase and fragile histidine triad fusion protein NitFhit from Drosophila melanogaster (Fruit fly).